A 501-amino-acid polypeptide reads, in one-letter code: Lysine--tRNA ligase (501 aa).

Residues E411 and E418 each coordinate Mg(2+).

This sequence belongs to the class-II aminoacyl-tRNA synthetase family. As to quaternary structure, homodimer. Mg(2+) serves as cofactor.

It localises to the cytoplasm. It carries out the reaction tRNA(Lys) + L-lysine + ATP = L-lysyl-tRNA(Lys) + AMP + diphosphate. The sequence is that of Lysine--tRNA ligase from Pseudomonas aeruginosa (strain UCBPP-PA14).